The sequence spans 591 residues: Pentatricopeptide repeat-containing protein At3g47530 (591 aa).

PPR repeat units lie at residues 76–110 (TLSH…SSLP), 112–146 (NPLS…GFLS), 147–177 (DSLL…IPKR), 178–208 (DTVS…MKND), 216–250 (DGVT…GLSG), 251–281 (ALNL…MRER), 282–316 (NVVS…GISP), 317–351 (EEQT…EFKI), and 354–384 (NLHH…MEMK). The tract at residues 389–464 (IWRTLLGACR…KPGCSAIELQ (76 aa)) is type E motif. The segment at 465 to 495 (GTVHEFIVDDVSHPRKEEIYKMLAEINQQLK) is type E(+) motif. Positions 496-591 (IAGYVAEITS…GGSCSCNDFW (96 aa)) are type DYW motif.

This sequence belongs to the PPR family. PCMP-H subfamily.

The sequence is that of Pentatricopeptide repeat-containing protein At3g47530 (PCMP-H76) from Arabidopsis thaliana (Mouse-ear cress).